The primary structure comprises 402 residues: Galactoside 2-alpha-L-fucosyltransferase (402 aa).

The Cytoplasmic portion of the chain corresponds to 1–6 (MRYNSN). Residues 7 to 27 (YLMYFCLVLGIFANIYVIIKI) form a helical; Signal-anchor for type II membrane protein membrane-spanning segment. At 28–402 (TLGSSHILEY…TDLNGKISKY (375 aa)) the chain is on the lumenal side. N-linked (GlcNAc...) asparagine glycans are attached at residues asparagine 119, asparagine 175, and asparagine 301.

Belongs to the glycosyltransferase 11 family. As to quaternary structure, may form oligomers. N-glycosylated. Expression is restricted to pharyngeal neurons and gland cells.

It is found in the golgi apparatus. The protein resides in the golgi stack membrane. Its pathway is protein modification; protein glycosylation. In terms of biological role, selectively catalyzes the addition of fucose in alpha 1-2 linkage to Gal-beta-(1-&gt;3)-GalNAc-alpha-R, Gal-beta-(1-&gt;3)-(GlcNAc-beta-(1-&gt;6))-GalNAc-alpha-R and Gal-beta-(1-&gt;3)-GalNAc acceptors but not Gal-beta-(1-&gt;3)-GlcNAc-beta-(1-&gt;3)-Gal-beta-(1-&gt;4)-Glc in vitro. The chain is Galactoside 2-alpha-L-fucosyltransferase from Caenorhabditis elegans.